Reading from the N-terminus, the 253-residue chain is MMVKIQDSVYLVTGGGSGLGEATAKLLLTEGARVTIFSRNEYKNEFPHDQVLSVKGDVRSESDVKRALEATIQKFGKLDGVMHCAGVFQNGDELFNMDTQQPGDYTVLTDIVTTNLLGTFNVNRLAIPYFLTNQPDEEGQKGIIINCSSTSGHSPMSSAVAYSTSKAAIIGLSYALAKQLSTLGIRVMDIAPALCDTPMFRRAVGFNQDIANFRNLFPARLIQPIEYANAVKHIIETPMLNGSSYQLDGALRP.

Residues 12-40 (VTGGGSGLGEATAKLLLTEGARVTIFSRN) and Asp63 contribute to the NAD(+) site. Ser149 is a binding site for substrate. The active-site Proton acceptor is the Tyr162. Lys166 serves as a coordination point for NAD(+).

This sequence belongs to the short-chain dehydrogenases/reductases (SDR) family. In terms of tissue distribution, specifically expressed in male midguts. Expressed at higher level in the anterior midgut of fed males.

It localises to the cytoplasm. The protein localises to the cytosol. It carries out the reaction (4R)-ipsdienol + NADP(+) = ipsdienone + NADPH + H(+). The catalysed reaction is (4R)-ipsdienol + NAD(+) = ipsdienone + NADH + H(+). Its function is as follows. Catalyzes the oxidation of racemic ipsdienol and (4R)-(-)-ipsdienol to form ipsdienone (2-methyl-6-methylene-2,7-octadien-4-one), an intermediate in the biosynthesis of pheromonal ipsdienol in male pine engraver beetles. In contrast, (4S)-(+)-ipsdienol is not a substrate. This chain is Ipsdienol dehydrogenase, found in Ips pini (Pine engraver beetle).